We begin with the raw amino-acid sequence, 174 residues long: ATP synthase subunit delta, sodium ion specific (174 aa).

The protein belongs to the ATPase delta chain family. F-type ATPases have 2 components, F(1) - the catalytic core - and F(0) - the membrane proton channel. F(1) has five subunits: alpha(3), beta(3), gamma(1), delta(1), epsilon(1). F(0) has three main subunits: a(1), b(2) and c(10-14). The alpha and beta chains form an alternating ring which encloses part of the gamma chain. F(1) is attached to F(0) by a central stalk formed by the gamma and epsilon chains, while a peripheral stalk is formed by the delta and b chains.

It localises to the cell inner membrane. F(1)F(0) ATP synthase produces ATP from ADP in the presence of a proton or sodium gradient. F-type ATPases consist of two structural domains, F(1) containing the extramembraneous catalytic core and F(0) containing the membrane proton channel, linked together by a central stalk and a peripheral stalk. During catalysis, ATP synthesis in the catalytic domain of F(1) is coupled via a rotary mechanism of the central stalk subunits to proton translocation. Functionally, this protein is part of the stalk that links CF(0) to CF(1). It either transmits conformational changes from CF(0) to CF(1) or is implicated in proton conduction. This chain is ATP synthase subunit delta, sodium ion specific, found in Ilyobacter tartaricus.